The chain runs to 525 residues: Chromosomal replication initiator protein DnaA (525 aa).

Residues 1–71 (MNDFWQHCSA…SDLARDFWNA (71 aa)) are domain I, interacts with DnaA modulators. A domain II region spans residues 71 to 188 (APIEVQFVLD…GEADSMYERS (118 aa)). The segment at 160–182 (AAAGRRTWRPGPGAAPANGGEAD) is disordered. A compositionally biased stretch (low complexity) spans 169–181 (PGPGAAPANGGEA). Positions 189-405 (KLNPVLTFDN…GALRKILAYS (217 aa)) are domain III, AAA+ region. 4 residues coordinate ATP: G233, G235, K236, and T237. The domain IV, binds dsDNA stretch occupies residues 406-525 (KFHGREISIE…LHVLEQTLKG (120 aa)).

Belongs to the DnaA family. In terms of assembly, oligomerizes as a right-handed, spiral filament on DNA at oriC.

It is found in the cytoplasm. In terms of biological role, plays an essential role in the initiation and regulation of chromosomal replication. ATP-DnaA binds to the origin of replication (oriC) to initiate formation of the DNA replication initiation complex once per cell cycle. Binds the DnaA box (a 9 base pair repeat at the origin) and separates the double-stranded (ds)DNA. Forms a right-handed helical filament on oriC DNA; dsDNA binds to the exterior of the filament while single-stranded (ss)DNA is stabiized in the filament's interior. The ATP-DnaA-oriC complex binds and stabilizes one strand of the AT-rich DNA unwinding element (DUE), permitting loading of DNA polymerase. After initiation quickly degrades to an ADP-DnaA complex that is not apt for DNA replication. Binds acidic phospholipids. The chain is Chromosomal replication initiator protein DnaA from Burkholderia ambifaria (strain ATCC BAA-244 / DSM 16087 / CCUG 44356 / LMG 19182 / AMMD) (Burkholderia cepacia (strain AMMD)).